A 97-amino-acid chain; its full sequence is Early nodulin-75 (97 aa).

Residues 1 to 97 (RPHVHPPPEH…PEYQPPHEKP (97 aa)) are disordered. 2 stretches are compositionally biased toward pro residues: residues 9–22 (EHQP…PEYQ) and 31–43 (VHPP…PYQK). Over residues 76–97 (PPHEKPPHEHPPPEYQPPHEKP) the composition is skewed to basic and acidic residues.

It belongs to the nodulin 75 family.

In terms of biological role, involved in early stages of root nodule development. The sequence is that of Early nodulin-75 (ENOD2) from Medicago sativa (Alfalfa).